The following is a 199-amino-acid chain: Superoxide dismutase [Mn/Fe] (199 aa).

Positions 27, 81, 161, and 165 each coordinate Fe(3+). Mn(2+)-binding residues include H27, H81, D161, and H165.

It belongs to the iron/manganese superoxide dismutase family. As to quaternary structure, homodimer. The cofactor is Mn(2+). It depends on Fe(3+) as a cofactor.

It catalyses the reaction 2 superoxide + 2 H(+) = H2O2 + O2. Destroys superoxide anion radicals which are normally produced within the cells and which are toxic to biological systems. Catalyzes the dismutation of superoxide anion radicals into O2 and H2O2 by successive reduction and oxidation of the transition metal ion at the active site. Also contributes to the inhibition of lipid oxidation. Manganese-preferring enzyme, less active with iron than with manganese. This is Superoxide dismutase [Mn/Fe] (sodA) from Staphylococcus xylosus.